Here is a 128-residue protein sequence, read N- to C-terminus: Small ribosomal subunit protein bS6 (128 aa).

The tract at residues 97 to 128 (TTPSPMMKEEKSRSLTAAPATDEAKPAEAESA) is disordered. The span at 118–128 (DEAKPAEAESA) shows a compositional bias: basic and acidic residues.

This sequence belongs to the bacterial ribosomal protein bS6 family.

Functionally, binds together with bS18 to 16S ribosomal RNA. In Aromatoleum aromaticum (strain DSM 19018 / LMG 30748 / EbN1) (Azoarcus sp. (strain EbN1)), this protein is Small ribosomal subunit protein bS6.